Here is a 383-residue protein sequence, read N- to C-terminus: Na(+)/H(+) antiporter NhaA (383 aa).

Transmembrane regions (helical) follow at residues Ala21–Trp41, Leu56–Leu76, Leu94–Phe114, Gly123–Gly143, Val152–Phe172, Gly175–Leu195, Thr202–Ile222, Phe258–Val278, Leu287–Ile307, Ile326–Ala346, and Gln355–Leu375.

Belongs to the NhaA Na(+)/H(+) (TC 2.A.33) antiporter family.

The protein localises to the cell inner membrane. The catalysed reaction is Na(+)(in) + 2 H(+)(out) = Na(+)(out) + 2 H(+)(in). In terms of biological role, na(+)/H(+) antiporter that extrudes sodium in exchange for external protons. This Granulibacter bethesdensis (strain ATCC BAA-1260 / CGDNIH1) protein is Na(+)/H(+) antiporter NhaA.